The chain runs to 143 residues: Mediator of RNA polymerase II transcription subunit 21 (143 aa).

Residues 53-130 are a coiled coil; that stretch reads KEFEKNIDEL…KVRTLTQDFT (78 aa).

It belongs to the Mediator complex subunit 21 family. Component of the Mediator complex.

It is found in the nucleus. Its function is as follows. Component of the Mediator complex, a coactivator involved in the regulated transcription of nearly all RNA polymerase II-dependent genes. Mediator functions as a bridge to convey information from gene-specific regulatory proteins to the basal RNA polymerase II transcription machinery. Mediator is recruited to promoters by direct interactions with regulatory proteins and serves as a scaffold for the assembly of a functional preinitiation complex with RNA polymerase II and the general transcription factors. This chain is Mediator of RNA polymerase II transcription subunit 21 (SRB7), found in Kluyveromyces lactis (strain ATCC 8585 / CBS 2359 / DSM 70799 / NBRC 1267 / NRRL Y-1140 / WM37) (Yeast).